We begin with the raw amino-acid sequence, 172 residues long: Shikimate kinase (172 aa).

11 to 16 (GSGKTT) provides a ligand contact to ATP. T15 is a Mg(2+) binding site. Substrate contacts are provided by D33, R57, and G79. R117 contacts ATP. R136 provides a ligand contact to substrate.

This sequence belongs to the shikimate kinase family. As to quaternary structure, monomer. Requires Mg(2+) as cofactor.

It is found in the cytoplasm. The catalysed reaction is shikimate + ATP = 3-phosphoshikimate + ADP + H(+). The protein operates within metabolic intermediate biosynthesis; chorismate biosynthesis; chorismate from D-erythrose 4-phosphate and phosphoenolpyruvate: step 5/7. Its function is as follows. Catalyzes the specific phosphorylation of the 3-hydroxyl group of shikimic acid using ATP as a cosubstrate. This Caldicellulosiruptor bescii (strain ATCC BAA-1888 / DSM 6725 / KCTC 15123 / Z-1320) (Anaerocellum thermophilum) protein is Shikimate kinase.